Reading from the N-terminus, the 225-residue chain is Ribonuclease 3 (225 aa).

The 123-residue stretch at 7–129 (MPRLCRTLGY…IIGAVYIDSG (123 aa)) folds into the RNase III domain. Glu42 lines the Mg(2+) pocket. Residue Asp46 is part of the active site. Asp115 and Glu118 together coordinate Mg(2+). Glu118 is an active-site residue. Residues 155-225 (DPKTLLQELL…AADALELMKR (71 aa)) enclose the DRBM domain.

This sequence belongs to the ribonuclease III family. In terms of assembly, homodimer. The cofactor is Mg(2+).

It localises to the cytoplasm. It carries out the reaction Endonucleolytic cleavage to 5'-phosphomonoester.. Its function is as follows. Digests double-stranded RNA. Involved in the processing of primary rRNA transcript to yield the immediate precursors to the large and small rRNAs (23S and 16S). Processes some mRNAs, and tRNAs when they are encoded in the rRNA operon. Processes pre-crRNA and tracrRNA of type II CRISPR loci if present in the organism. The sequence is that of Ribonuclease 3 from Shewanella sediminis (strain HAW-EB3).